The following is a 1112-amino-acid chain: Phytochrome E (1112 aa).

The segment at 1–20 (MGFESSSSAASNMKPQPQKS) is disordered. The GAF domain occupies 217-387 (DIGALCDTVV…AFGLQLQMEL (171 aa)). A phytochromobilin-binding site is contributed by cysteine 322. 2 consecutive PAS domains span residues 595 to 666 (FVCE…LQGE) and 732 to 803 (DYKT…LISL). Positions 877 to 1096 (YVRQEIKNPL…FFQVDLQVKT (220 aa)) constitute a Histidine kinase domain.

This sequence belongs to the phytochrome family. Homodimer. In terms of processing, contains one covalently linked phytochromobilin chromophore.

Regulatory photoreceptor which exists in two forms that are reversibly interconvertible by light: the Pr form that absorbs maximally in the red region of the spectrum and the Pfr form that absorbs maximally in the far-red region. Photoconversion of Pr to Pfr induces an array of morphogenic responses, whereas reconversion of Pfr to Pr cancels the induction of those responses. Pfr controls the expression of a number of nuclear genes including those encoding the small subunit of ribulose-bisphosphate carboxylase, chlorophyll A/B binding protein, protochlorophyllide reductase, rRNA, etc. It also controls the expression of its own gene(s) in a negative feedback fashion. The chain is Phytochrome E (PHYE) from Arabidopsis thaliana (Mouse-ear cress).